The following is a 158-amino-acid chain: Small ribosomal subunit protein uS9 (158 aa).

It belongs to the universal ribosomal protein uS9 family.

This is Small ribosomal subunit protein uS9 from Rhodopseudomonas palustris (strain HaA2).